The primary structure comprises 294 residues: Undecaprenyl-diphosphatase (294 aa).

9 helical membrane-spanning segments follow: residues 2-22 (SMIYITLNIIAYVIDVRSLIL), 27-47 (LVFSLILGIVEGLTEFLPISS), 65-85 (VIAFTVIIQLGAILSITKIFW), 110-130 (LCIRHIFLGTFPGIMLGMIFY), 135-155 (LIFELTYIMYGLIIGGIFLLV), 172-192 (ITYLQAFLIGCFQCLAFWPGF), 215-235 (FSFFLAVPIIFGSAVLTLYHY), 239-259 (IGLMDVLLLIAGSATAFFIAL), and 272-292 (VSLIPFAIYRFLLAGGIYWGL).

This sequence belongs to the UppP family.

It localises to the cell inner membrane. The catalysed reaction is di-trans,octa-cis-undecaprenyl diphosphate + H2O = di-trans,octa-cis-undecaprenyl phosphate + phosphate + H(+). Its function is as follows. Catalyzes the dephosphorylation of undecaprenyl diphosphate (UPP). Confers resistance to bacitracin. The chain is Undecaprenyl-diphosphatase from Blochmanniella pennsylvanica (strain BPEN).